A 423-amino-acid polypeptide reads, in one-letter code: Dihydroorotase (423 aa).

The Zn(2+) site is built by histidine 60 and histidine 62. Substrate contacts are provided by residues 62-64 (HFR) and asparagine 94. Residues aspartate 152, histidine 179, histidine 232, and aspartate 305 each contribute to the Zn(2+) site. The active site involves aspartate 305. Substrate-binding positions include histidine 309 and 323 to 324 (PG).

This sequence belongs to the metallo-dependent hydrolases superfamily. DHOase family. Class I DHOase subfamily. Requires Zn(2+) as cofactor.

It carries out the reaction (S)-dihydroorotate + H2O = N-carbamoyl-L-aspartate + H(+). Its pathway is pyrimidine metabolism; UMP biosynthesis via de novo pathway; (S)-dihydroorotate from bicarbonate: step 3/3. Catalyzes the reversible cyclization of carbamoyl aspartate to dihydroorotate. This is Dihydroorotase from Sulfurihydrogenibium sp. (strain YO3AOP1).